A 642-amino-acid polypeptide reads, in one-letter code: Probable glutamate--tRNA ligase, cytoplasmic (642 aa).

An L-glutamate-binding site is contributed by 152–154 (RFP). The short motif at 157 to 166 (PNGRLHIGHA) is the 'HIGH' region element. Histidine 162 contributes to the ATP binding site. L-glutamate is bound by residues aspartate 188, 326-330 (YDFAC), and arginine 344. ATP contacts are provided by residues glutamate 347 and 382–386 (VLSKR). The short motif at 382–386 (VLSKR) is the 'KMSKS' region element.

This sequence belongs to the class-I aminoacyl-tRNA synthetase family. Glutamate--tRNA ligase type 2 subfamily.

It localises to the cytoplasm. The catalysed reaction is tRNA(Glu) + L-glutamate + ATP = L-glutamyl-tRNA(Glu) + AMP + diphosphate. This chain is Probable glutamate--tRNA ligase, cytoplasmic, found in Encephalitozoon cuniculi (strain GB-M1) (Microsporidian parasite).